We begin with the raw amino-acid sequence, 301 residues long: MEQLVNELIEANVGRVLVDEPLARYTTMKIGGPADILIVPKHVAGIEKTLQLVKKYKTKWTVIGRGSNLLVSDLGIEGVVIRLGEGLEHLEVEKHRVRVGGGYPLIKLSTLLSRQGLAGLEFASGIPGSVGGAVYMNAGAHKSDISNILSKALILFEDGTIDWLTHGEMEFSYRTSVLQTKRPGIVLEAEFQLQIGERERIVSVMQKNKDYRRETQPWNHPCAGSVFRNPTPYFAGDLIEKAGLRGYQIGGAQISEMHGNFIINTGGASAQDVLSLIALIKQTIKDKFGVAMHTEVEIIGR.

The 168-residue stretch at 29–196 (KIGGPADILI…LEAEFQLQIG (168 aa)) folds into the FAD-binding PCMH-type domain. Arginine 174 is an active-site residue. Catalysis depends on serine 225, which acts as the Proton donor. Residue glutamate 295 is part of the active site.

It belongs to the MurB family. It depends on FAD as a cofactor.

It localises to the cytoplasm. The enzyme catalyses UDP-N-acetyl-alpha-D-muramate + NADP(+) = UDP-N-acetyl-3-O-(1-carboxyvinyl)-alpha-D-glucosamine + NADPH + H(+). Its pathway is cell wall biogenesis; peptidoglycan biosynthesis. Cell wall formation. The polypeptide is UDP-N-acetylenolpyruvoylglucosamine reductase 1 (Bacillus cereus (strain ZK / E33L)).